Reading from the N-terminus, the 511-residue chain is Glucans biosynthesis protein G (511 aa).

The first 22 residues, 1-22 (MMKMRWLSAAVMLTLYTSSSWA), serve as a signal peptide directing secretion.

It belongs to the OpgD/OpgG family.

It localises to the periplasm. The protein operates within glycan metabolism; osmoregulated periplasmic glucan (OPG) biosynthesis. Functionally, involved in the biosynthesis of osmoregulated periplasmic glucans (OPGs). This is Glucans biosynthesis protein G (mdoG) from Shigella flexneri.